Here is a 44-residue protein sequence, read N- to C-terminus: ANFDIINQXPYTVXAAASPGGGRRLETGQSXXLQVAPGTTXAAI.

The protein belongs to the thaumatin family.

The sequence is that of Thaumatin-like protein 5 from Glebionis coronaria (Crown daisy).